A 754-amino-acid chain; its full sequence is Condensin complex subunit 2 (754 aa).

The disordered stretch occupies residues 104-149 (LAQRKTNGASNGDDSNGGNGEGLGGDSDEANIEIDPLTGMPISNDP). Over residues 118–128 (SNGGNGEGLGG) the composition is skewed to gly residues. Ser245 carries the post-translational modification Phosphoserine. Residues 359–379 (CYPDENHDNTSHDEQDDDNVN) are disordered. The span at 362-371 (DENHDNTSHD) shows a compositional bias: basic and acidic residues. Ser548 carries the phosphoserine modification. The interval 665-688 (HDSRKNREQSSNDSETHTEDESTK) is disordered.

It belongs to the CND2 (condensin subunit 2) family. Component of the condensin complex, which contains the SMC2 and SMC4 heterodimer, and three non SMC subunits that probably regulate the complex: BRN1, YCS4 and YCG1/YCS5.

Its subcellular location is the nucleus. It is found in the cytoplasm. The protein localises to the chromosome. Functionally, regulatory subunit of the condensin complex, a complex required for conversion of interphase chromatin into mitotic-like condense chromosomes. The condensin complex probably introduces positive supercoils into relaxed DNA in the presence of type I topoisomerases and converts nicked DNA into positive knotted forms in the presence of type II topoisomerases. The condensin complex probably also plays a role during interphase. The polypeptide is Condensin complex subunit 2 (BRN1) (Saccharomyces cerevisiae (strain ATCC 204508 / S288c) (Baker's yeast)).